The chain runs to 1149 residues: ATP-dependent helicase/deoxyribonuclease subunit B (1149 aa).

8–15 (GRAGTGKT) contacts ATP. [4Fe-4S] cluster contacts are provided by Cys784, Cys1102, Cys1105, and Cys1111.

The protein belongs to the helicase family. AddB/RexB type 1 subfamily. Heterodimer of AddA and AddB. Mg(2+) serves as cofactor. The cofactor is [4Fe-4S] cluster.

The heterodimer acts as both an ATP-dependent DNA helicase and an ATP-dependent, dual-direction single-stranded exonuclease. Recognizes the chi site generating a DNA molecule suitable for the initiation of homologous recombination. The AddB subunit has 5' -&gt; 3' nuclease activity but not helicase activity. The chain is ATP-dependent helicase/deoxyribonuclease subunit B from Thermoanaerobacter pseudethanolicus (strain ATCC 33223 / 39E) (Clostridium thermohydrosulfuricum).